A 1023-amino-acid polypeptide reads, in one-letter code: Cell division cycle-associated protein 2 (1023 aa).

Residues 1–14 (MDANSKDKPPETKE) are compositionally biased toward basic and acidic residues. The tract at residues 1 to 21 (MDANSKDKPPETKESAMNNAG) is disordered. Residues S98, S120, S126, S131, S210, S291, and S309 each carry the phosphoserine modification. Phosphothreonine is present on T312. Residues 389-449 (KRKRVTFGED…PEPLPQPDFD (61 aa)) enclose the PP1-binding domain. A phosphoserine mark is found at S400 and S407. Phosphothreonine is present on T412. Residue S437 is modified to Phosphoserine. Positions 542 to 580 (SQETKCTKRALPKKSQVLKSCRKKKGKGKKSVQKSLYGE) are disordered. Residues 561–573 (SCRKKKGKGKKSV) show a composition bias toward basic residues. 2 positions are modified to phosphoserine: S591 and S614. The segment at 667 to 729 (SSLGNATSDE…ERVASDSPKP (63 aa)) is disordered. Residues 679-691 (NTNIMNINENKNI) are compositionally biased toward low complexity. Residues 696–706 (NKSESENEPKA) are compositionally biased toward basic and acidic residues. S710 and S756 each carry phosphoserine. A Glycyl lysine isopeptide (Lys-Gly) (interchain with G-Cter in SUMO2) cross-link involves residue K762. The span at 803–816 (ESKSQSEDLGRKPM) shows a compositional bias: basic and acidic residues. Disordered stretches follow at residues 803-860 (ESKS…GSSV) and 936-1023 (SPIK…ERKQ). A phosphoserine mark is found at S936 and S977. Polar residues-rich tracts occupy residues 979–992 (CISTLANTKATSQF) and 1000–1010 (SLNGKGESSLT). At S1000 the chain carries Phosphoserine. Residues 1013–1023 (ERIEHNGERKQ) are compositionally biased toward basic and acidic residues.

As to quaternary structure, interacts with PPP1CC. Phosphorylated by CDK1. May regulate its subcellular location. Ubiquitously expressed.

It is found in the nucleus. In terms of biological role, regulator of chromosome structure during mitosis required for condensin-depleted chromosomes to retain their compact architecture through anaphase. Acts by mediating the recruitment of phopsphatase PP1-gamma subunit (PPP1CC) to chromatin at anaphase and into the following interphase. At anaphase onset, its association with chromatin targets a pool of PPP1CC to dephosphorylate substrates. This is Cell division cycle-associated protein 2 (CDCA2) from Homo sapiens (Human).